The following is a 765-amino-acid chain: Probable dehydratase PflD (765 aa).

A PFL domain is found at 3-637; it reads NRISRLKTAL…VVGATPDGRF (635 aa). The Glycine radical domain occupies 645 to 765; it reads GGLSPMLGQD…DIIRRTAHQL (121 aa). At Gly741 the chain carries Glycine radical.

It belongs to the glycyl radical enzyme (GRE) family.

Probably shows dehydratase activity. In Escherichia coli (strain K12), this protein is Probable dehydratase PflD (pflD).